The primary structure comprises 515 residues: GMP synthase [glutamine-hydrolyzing] (515 aa).

The Glutamine amidotransferase type-1 domain occupies 10–200 (TIIVLDFGSQ…VFGVCGCSEG (191 aa)). The Nucleophile role is filled by cysteine 87. Catalysis depends on residues histidine 174 and glutamate 176. A GMPS ATP-PPase domain is found at 201–390 (WNMENFIEVE…LGIPDEIVWR (190 aa)). 228–234 (SGGVDSS) contributes to the ATP binding site.

As to quaternary structure, homodimer.

It catalyses the reaction XMP + L-glutamine + ATP + H2O = GMP + L-glutamate + AMP + diphosphate + 2 H(+). It functions in the pathway purine metabolism; GMP biosynthesis; GMP from XMP (L-Gln route): step 1/1. Catalyzes the synthesis of GMP from XMP. The protein is GMP synthase [glutamine-hydrolyzing] of Bacillus cereus (strain ATCC 14579 / DSM 31 / CCUG 7414 / JCM 2152 / NBRC 15305 / NCIMB 9373 / NCTC 2599 / NRRL B-3711).